Here is a 570-residue protein sequence, read N- to C-terminus: Periplasmic trehalase (570 aa).

The first 34 residues, 1–34 (MIPPEIRRSVLLQKAIKLALAGTLLTFASFSATA), serve as a signal peptide directing secretion. Residues Arg159, 166 to 167 (WD), Asn203, 212 to 214 (RSQ), 284 to 286 (RPE), and Gly317 contribute to the substrate site. Catalysis depends on proton donor/acceptor residues Asp319 and Glu503. Glu518 provides a ligand contact to substrate. The disordered stretch occupies residues 544-570 (KPCDSVPSTRPASLSATPTKTPSAATQ). The segment covering 554–570 (PASLSATPTKTPSAATQ) has biased composition (low complexity).

It belongs to the glycosyl hydrolase 37 family. In terms of assembly, monomer.

The protein localises to the periplasm. The catalysed reaction is alpha,alpha-trehalose + H2O = alpha-D-glucose + beta-D-glucose. Its function is as follows. Provides the cells with the ability to utilize trehalose at high osmolarity by splitting it into glucose molecules that can subsequently be taken up by the phosphotransferase-mediated uptake system. The protein is Periplasmic trehalase of Salmonella typhimurium (strain LT2 / SGSC1412 / ATCC 700720).